A 367-amino-acid chain; its full sequence is Small ribosomal subunit protein uS2 (367 aa).

Residues 1 to 68 (MPKKAEAKTG…NSTPSTGSKF (68 aa)) are disordered. Residues 21-40 (AKKDVKAEVNETNKTAEKVS) are compositionally biased toward basic and acidic residues. Low complexity predominate over residues 53–66 (TNESSSNSTPSTGS).

The protein belongs to the universal ribosomal protein uS2 family.

In Malacoplasma penetrans (strain HF-2) (Mycoplasma penetrans), this protein is Small ribosomal subunit protein uS2.